The chain runs to 406 residues: E3 ubiquitin-protein ligase RING1 (406 aa).

Residue T24 is modified to Phosphothreonine. The interval 30 to 234 is necessary for transcriptional repression; that stretch reads MDGTEIAVSP…GGAGSEDSGD (205 aa). Phosphoserine is present on S38. An RING-type zinc finger spans residues 48–88; sequence CPICLDMLKNTMTTKECLHRFCSDCIVTALRSGNKECPTCR. Phosphoserine occurs at positions 140, 187, and 190. 2 disordered regions span residues 151 to 263 and 309 to 354; these read HRAQ…GEIE and QQQE…PSLE. The span at 175-187 shows a compositional bias: acidic residues; sequence EPGEGEGDGEDIS. The short motif at 201 to 204 is the Nuclear localization signal element; sequence KRPR. Residues 205 to 228 show a composition bias toward gly residues; the sequence is GGGAGGSSVGTGGGAAGGACGGAG. At T215 the chain carries Phosphothreonine. A phosphoserine mark is found at S229 and S232. Residues 230-406 are necessary for interaction with CBX2; the sequence is EDSGDRGGTL…LCYAPTKDPK (177 aa). Residues 235 to 244 show a composition bias toward gly residues; the sequence is RGGTLGGGTL. Positions 246–258 are enriched in pro residues; that stretch reads PPSPPGAPSPPEP. S248 and S254 each carry phosphoserine. A compositionally biased stretch (gly residues) spans 317–343; that stretch reads GGPGGGASDTGGPDGGGGERGVSGGGE.

Component of chromatin-associated Polycomb (PcG) complexes. Part of the E2F6.com-1 complex in G0 phase composed of E2F6, MGA, MAX, TFDP1, CBX3, BAT8, EUHMTASE1, RING1, RNF2/RING2 MBLR, L3MBTL2 and YAF2. Interacts with CBX2 and PCGF6. Component of a PRC1-like complex. Component of repressive BCOR complex containing Polycomb group subcomplex at least composed of RYBP, PCGF1, BCOR and RNF2/RING2. Interacts with BMI1, PHC2, PCGF2, RNF2; CBX6, CBX7 and CBX8. Interacts with MN1. Interacts with USP26.

Its subcellular location is the nucleus speckle. The catalysed reaction is S-ubiquitinyl-[E2 ubiquitin-conjugating enzyme]-L-cysteine + [acceptor protein]-L-lysine = [E2 ubiquitin-conjugating enzyme]-L-cysteine + N(6)-ubiquitinyl-[acceptor protein]-L-lysine.. It functions in the pathway protein modification; protein ubiquitination. In terms of biological role, constitutes one of the E3 ubiquitin-protein ligases that mediate monoubiquitination of 'Lys-119' of histone H2A, thereby playing a central role in histone code and gene regulation. H2A 'Lys-119' ubiquitination gives a specific tag for epigenetic transcriptional repression and participates in X chromosome inactivation of female mammals. Essential component of a Polycomb group (PcG) multiprotein PRC1-like complex, a complex class required to maintain the transcriptionally repressive state of many genes, including Hox genes, throughout development. PcG PRC1 complex acts via chromatin remodeling and modification of histones, rendering chromatin heritably changed in its expressibility. Compared to RNF2/RING2, it does not have the main E3 ubiquitin ligase activity on histone H2A, and it may rather act as a modulator of RNF2/RING2 activity. In Rattus norvegicus (Rat), this protein is E3 ubiquitin-protein ligase RING1.